Reading from the N-terminus, the 239-residue chain is tRNA (guanine-N(7)-)-methyltransferase (239 aa).

S-adenosyl-L-methionine contacts are provided by Glu-69, Glu-94, Asp-121, and Asp-144. Asp-144 is a catalytic residue. A substrate-binding site is contributed by Lys-148. The segment at 150-155 (RHNKRR) is interaction with RNA. Substrate-binding positions include Asp-180 and 217–220 (TKFE).

It belongs to the class I-like SAM-binding methyltransferase superfamily. TrmB family. In terms of assembly, monomer.

The enzyme catalyses guanosine(46) in tRNA + S-adenosyl-L-methionine = N(7)-methylguanosine(46) in tRNA + S-adenosyl-L-homocysteine. Its pathway is tRNA modification; N(7)-methylguanine-tRNA biosynthesis. Its function is as follows. Catalyzes the formation of N(7)-methylguanine at position 46 (m7G46) in tRNA. The chain is tRNA (guanine-N(7)-)-methyltransferase from Escherichia coli O6:H1 (strain CFT073 / ATCC 700928 / UPEC).